The primary structure comprises 328 residues: Naphthalene 1,2-dioxygenase/salicylate 5-hydroxylase systems, ferredoxin--NAD(P)(+), reductase component (328 aa).

In terms of domain architecture, 2Fe-2S ferredoxin-type spans M1–D89. Positions 35, 40, 43, and 73 each coordinate [2Fe-2S] cluster. The region spanning A96–R193 is the FAD-binding FR-type domain.

This sequence belongs to the bacterial ring-hydroxylating dioxygenase ferredoxin reductase family. Ferredoxin reductase NagAa belongs to both the salicylate 5-hydroxylase (S5H) and the naphthalene 1,2-dioxygenase (NDO) multicomponent enzyme systems. The NDO multicomponent enzyme system is composed of an electron transfer component and a dioxygenase component (iron sulfur protein (ISP)). The electron transfer component is composed of a ferredoxin reductase (NagAa) and a ferredoxin (NagAb), and the dioxygenase component is formed by a large alpha subunit (NagAc) and a small beta subunit (NagAd). The S5H multicomponent enzyme system is composed of an electron transfer component and a monooxygenase component. The electron transfer component is comprised of a ferredoxin reductase (NagAa) and a ferredoxin (NagAb), and the monooxygenase component is formed by a large subunit (NagG) and a small subunit (NagH). The cofactor is [2Fe-2S] cluster. It depends on FAD as a cofactor.

It catalyses the reaction 2 reduced [2Fe-2S]-[ferredoxin] + NAD(+) + H(+) = 2 oxidized [2Fe-2S]-[ferredoxin] + NADH. It carries out the reaction 2 reduced [2Fe-2S]-[ferredoxin] + NADP(+) + H(+) = 2 oxidized [2Fe-2S]-[ferredoxin] + NADPH. The protein operates within aromatic compound metabolism; naphthalene degradation. Functionally, component of two multicomponent enzyme systems which are involved in the catabolism of naphthalene. Plays a role as an electron transfer component for both salicylate 5-hydroxylase (S5H) and naphthalene 1,2-dioxygenase (NDO) systems, by transferring electrons from NAD(P)H to the oxygenase component via the ferredoxin NagAb. The electron transport chain from the two systems can use both NADH and NADPH as electron donors at approximately similar rates. This chain is Naphthalene 1,2-dioxygenase/salicylate 5-hydroxylase systems, ferredoxin--NAD(P)(+), reductase component, found in Ralstonia sp.